Consider the following 568-residue polypeptide: Probable WRKY transcription factor 34 (568 aa).

The segment at residues 172-236 (ACCAPADDGY…YTGDHIHSKP (65 aa)) is a DNA-binding region (WRKY 1). 4 residues coordinate Zn(2+): Cys203, Cys208, His231, and His233. Disordered regions lie at residues 230–252 (DHIH…TGQD) and 337–360 (KRRK…EPRV). Residues 366–431 (SDIDILDDGY…YIGKHTHVVP (66 aa)) constitute a DNA-binding region (WRKY 2). 4 residues coordinate Zn(2+): Cys397, Cys402, His426, and His428.

It belongs to the WRKY group I family.

Its subcellular location is the nucleus. Functionally, transcription factor. Interacts specifically with the W box (5'-(T)TGAC[CT]-3'), a frequently occurring elicitor-responsive cis-acting element. The protein is Probable WRKY transcription factor 34 (WRKY34) of Arabidopsis thaliana (Mouse-ear cress).